Reading from the N-terminus, the 597-residue chain is Pheromone-processing carboxypeptidase KEX1 (597 aa).

The N-terminal stretch at 1 to 18 is a signal peptide; sequence MVTRHVLAAALAGSMTSA. Over 19–508 the chain is Lumenal; it reads QRLHPTSQRA…QTGANSSQVH (490 aa). Residues Ser186 and Asp377 contribute to the active site. Asn395 and Asn425 each carry an N-linked (GlcNAc...) asparagine glycan. The active site involves His436. 2 N-linked (GlcNAc...) asparagine glycosylation sites follow: Asn472 and Asn503. The chain crosses the membrane as a helical span at residues 509 to 529; it reads IGIAWLWVALVIAVVSSVLAV. Topologically, residues 530 to 597 are cytoplasmic; sequence CVTIVCIRNK…TSPRSRVTEV (68 aa).

This sequence belongs to the peptidase S10 family.

It localises to the golgi apparatus. The protein resides in the trans-Golgi network membrane. It carries out the reaction Preferential release of a C-terminal arginine or lysine residue.. In terms of biological role, protease with a carboxypeptidase B-like function involved in the C-terminal processing of the lysine and arginine residues from protein precursors. Promotes cell fusion and is involved in the programmed cell death. The sequence is that of Pheromone-processing carboxypeptidase KEX1 (KEX1) from Phytophthora infestans (strain T30-4) (Potato late blight agent).